Consider the following 356-residue polypeptide: Phosphoribosylformylglycinamidine cyclo-ligase (356 aa).

This sequence belongs to the AIR synthase family.

The protein resides in the cytoplasm. It carries out the reaction 2-formamido-N(1)-(5-O-phospho-beta-D-ribosyl)acetamidine + ATP = 5-amino-1-(5-phospho-beta-D-ribosyl)imidazole + ADP + phosphate + H(+). Its pathway is purine metabolism; IMP biosynthesis via de novo pathway; 5-amino-1-(5-phospho-D-ribosyl)imidazole from N(2)-formyl-N(1)-(5-phospho-D-ribosyl)glycinamide: step 2/2. The polypeptide is Phosphoribosylformylglycinamidine cyclo-ligase (Sinorhizobium medicae (strain WSM419) (Ensifer medicae)).